We begin with the raw amino-acid sequence, 291 residues long: ATP synthase gamma chain (291 aa).

This sequence belongs to the ATPase gamma chain family. F-type ATPases have 2 components, CF(1) - the catalytic core - and CF(0) - the membrane proton channel. CF(1) has five subunits: alpha(3), beta(3), gamma(1), delta(1), epsilon(1). CF(0) has three main subunits: a, b and c.

The protein localises to the cell membrane. Functionally, produces ATP from ADP in the presence of a proton gradient across the membrane. The gamma chain is believed to be important in regulating ATPase activity and the flow of protons through the CF(0) complex. The protein is ATP synthase gamma chain of Streptococcus pyogenes serotype M3 (strain ATCC BAA-595 / MGAS315).